The chain runs to 229 residues: uncharacterized protein (229 aa).

The 116-residue stretch at 102–217 folds into the PilZ domain; sequence RRRTVRVEPD…REKVRRYVFE (116 aa).

It to A.aeolicus aq_820 and aq_1211.

This is an uncharacterized protein from Aquifex aeolicus (strain VF5).